The following is a 138-amino-acid chain: Small ribosomal subunit protein uS11c (138 aa).

Residues 1-24 (MAKAIPRSGSRRSGRIGSRKSTRR) form a disordered region. Residues 9-24 (GSRRSGRIGSRKSTRR) show a composition bias toward basic residues.

This sequence belongs to the universal ribosomal protein uS11 family. As to quaternary structure, part of the 30S ribosomal subunit.

Its subcellular location is the plastid. The protein localises to the chloroplast. In Panax ginseng (Korean ginseng), this protein is Small ribosomal subunit protein uS11c.